Here is a 228-residue protein sequence, read N- to C-terminus: UPF0758 protein stu1465 (228 aa).

The region spanning 103 to 225 (QIMSSQQVAR…YYSFREERED (123 aa)) is the MPN domain. 3 residues coordinate Zn(2+): His174, His176, and Asp187. The JAMM motif motif lies at 174–187 (HNHPSGEAYPSRND).

This sequence belongs to the UPF0758 family.

This Streptococcus thermophilus (strain ATCC BAA-250 / LMG 18311) protein is UPF0758 protein stu1465.